A 542-amino-acid polypeptide reads, in one-letter code: DNA-binding protein modulo (542 aa).

The segment at 1–166 is disordered; sequence MAQKKAVTVK…RGIPKVKVGK (166 aa). Phosphoserine occurs at positions 42 and 44. Residues 59–114 are compositionally biased toward acidic residues; sequence SEEDESDVEEQNDEQPGDDSDFETEEAAGLIDDEAEEDEEYNSDDEEDDDDDELEP. Residues S120, S129, and S142 each carry the phosphoserine modification. Over residues 123–135 the composition is skewed to acidic residues; that stretch reads ADEVDESDDDEEA. Basic and acidic residues predominate over residues 136–158; the sequence is PVEKPVSKKSEKANSEKSEENRG. RRM domains lie at 175–251, 258–331, 340–429, and 420–489; these read QIVF…QPRN, RTVV…RISQ, LTLV…NLTS, and RAIL…PNSL. S304 carries the phosphoserine modification. S330 is subject to Phosphoserine; by PKA. Residue S443 is modified to Phosphoserine. Residues 505-542 are disordered; sequence RAPRKFQKDTKPNFGKKPFNKRPAQENGGKSFVKRARF.

The N-terminus is blocked.

It is found in the nucleus. In terms of biological role, its capacity to bind DNA and protein(s), and its differential expression during development suggest a role in the regulation of gene expression during Drosophila development. It could, in interaction with other factors, be required for the translation of instructions provided by pattern forming genes and controls, via chromatin changes, the activity of genes critical for the process of morphogenesis of several embryonic territories. The chain is DNA-binding protein modulo (mod) from Drosophila melanogaster (Fruit fly).